We begin with the raw amino-acid sequence, 88 residues long: Class II hydrophobin 5 (88 aa).

A signal peptide spans 1–14; it reads MQFLVLALASLAAA. Intrachain disulfides connect C27–C73, C35–C64, C36–C48, and C74–C85.

The protein belongs to the cerato-ulmin hydrophobin family. In terms of assembly, homotetramer. Further self-assembles to form highly ordered films at water-air interfaces through intermolecular interactions. As to expression, only appears on young aerial hyphae. HCf-5 is the most abundant transcript in sporulating mycelium.

The protein resides in the secreted. It localises to the cell wall. Functionally, aerial growth, conidiation, and dispersal of filamentous fungi in the environment rely upon a capability of their secreting small amphipathic proteins called hydrophobins (HPBs) with low sequence identity. Class I can self-assemble into an outermost layer of rodlet bundles on aerial cell surfaces, conferring cellular hydrophobicity that supports fungal growth, development and dispersal; whereas Class II form highly ordered films at water-air interfaces through intermolecular interactions but contribute nothing to the rodlet structure. In Passalora fulva (Tomato leaf mold), this protein is Class II hydrophobin 5.